The sequence spans 198 residues: Protein hunchback (198 aa).

Disordered regions lie at residues 16–111 (SHHH…LPGL) and 152–198 (NDKL…KYMA). Basic residues predominate over residues 17–31 (HHHHHHHAHHSHHQH). Low complexity-rich tracts occupy residues 35–46 (SNSNSNASSPHQ) and 56–83 (SNTNLQLEQYLKQQQQQQQQQQQQQQQQ). Polar residues predominate over residues 95–105 (PSPSNNDQNSP). Over residues 179 to 198 (EPEKEHDLMSNSSEDMKYMA) the composition is skewed to basic and acidic residues.

This sequence belongs to the hunchback C2H2-type zinc-finger protein family.

The protein resides in the nucleus. Its function is as follows. Gap class segmentation protein that controls development of head structures. The protein is Protein hunchback (hb) of Drosophila lineosetae (Fruit fly).